We begin with the raw amino-acid sequence, 482 residues long: Auxin transporter-like protein 2 (482 aa).

Residues 1–58 (MVPAGDQAEEAIVADAGKEEAEVRAAMGVEQDGKFSMTSLLWHGGSVWDAWFSCASNQ) are Cytoplasmic-facing. Residues 59–76 (VAQVLLTLPYSFSQLGML) traverse the membrane as a helical segment. The Extracellular segment spans residues 77–78 (SG). The chain crosses the membrane as a helical span at residues 79 to 99 (LLLQVFYGLMGSWTAYLISVL). Over 100–134 (YVEYRARKEKEGVSFKNHVIQWFEVLDGLLGPYWK) the chain is Cytoplasmic. Residues 135–155 (AAGLAFNCTFLLFGSVIQLIA) traverse the membrane as a helical segment. The Extracellular portion of the chain corresponds to 156–171 (CASNIYYINDRLDKRT). The helical transmembrane segment at 172–192 (WTYIFGACCSTTVFIPSFHNY) threads the bilayer. A topological domain (cytoplasmic) is located at residue Arg-193. The helical transmembrane segment at 194-214 (IWSFLGLGMTTYTAWYLAIAA) threads the bilayer. The Extracellular segment spans residues 215-231 (AVHGQVDGVTHSGPSKM). Residues 232-252 (VLYFTGATNILYTFGGHAVTV) form a helical membrane-spanning segment. Residues 253–265 (EIMHAMWKPQKFK) lie on the Cytoplasmic side of the membrane. Residues 266 to 286 (YIYLVATLYVFTLTLPSASAM) form a helical membrane-spanning segment. Residues 287–313 (YWAFGDALLTHSNAFSLLPRSGWRDAA) lie on the Extracellular side of the membrane. A helical membrane pass occupies residues 314-334 (VILMLIHQFITFGFACTPLYF). Topologically, residues 335–355 (VWEKAIGMHGTRSVLTRALAR) are cytoplasmic. A helical membrane pass occupies residues 356-376 (LPIVVPIWFLAIIFPFFGPIN). Ser-377 is a topological domain (extracellular). Residues 378-398 (AVGALLVSFTVYIIPSLSHIL) traverse the membrane as a helical segment. Residues 399 to 423 (TYRSASARLNAAEKPPPFLPSWSGM) are Cytoplasmic-facing. The chain crosses the membrane as a helical span at residues 424–444 (FVVNVFVVAWVLVVGFGLGGW). Residues 445–482 (ASVTNFIKQIDTFGLFAKCYQCPPRAHAGAPLPAPPRH) lie on the Extracellular side of the membrane.

It belongs to the amino acid/polyamine transporter 2 family. Amino acid/auxin permease (AAAP) (TC 2.A.18.1) subfamily.

It localises to the cell membrane. Carrier protein involved in proton-driven auxin influx. May mediate the formation of auxin gradient from developing leaves (site of auxin biosynthesis) to tips. The polypeptide is Auxin transporter-like protein 2 (Oryza sativa subsp. japonica (Rice)).